We begin with the raw amino-acid sequence, 281 residues long: Phosphonates import ATP-binding protein PhnC 2 (281 aa).

Positions 4–238 constitute an ABC transporter domain; sequence LTVDNVTKTY…LVDDLYGNVE (235 aa). ATP is bound at residue 35 to 42; sequence GESGAGKS. A disordered region spans residues 243-281; sequence ATDNSDNSTVDTSDGTRYDTETGSDGTDEVDVIGRQVES. Over residues 244 to 255 the composition is skewed to low complexity; that stretch reads TDNSDNSTVDTS.

This sequence belongs to the ABC transporter superfamily. Phosphonates importer (TC 3.A.1.9.1) family. As to quaternary structure, the complex is composed of two ATP-binding proteins (PhnC), two transmembrane proteins (PhnE) and a solute-binding protein (PhnD).

The protein localises to the cell membrane. The enzyme catalyses phosphonate(out) + ATP + H2O = phosphonate(in) + ADP + phosphate + H(+). Functionally, part of the ABC transporter complex PhnCDE involved in phosphonates import. Responsible for energy coupling to the transport system. The polypeptide is Phosphonates import ATP-binding protein PhnC 2 (Haloquadratum walsbyi (strain DSM 16790 / HBSQ001)).